The primary structure comprises 330 residues: Phosphate acyltransferase (330 aa).

Belongs to the PlsX family. As to quaternary structure, homodimer. Probably interacts with PlsY.

Its subcellular location is the cytoplasm. The catalysed reaction is a fatty acyl-[ACP] + phosphate = an acyl phosphate + holo-[ACP]. It participates in lipid metabolism; phospholipid metabolism. Functionally, catalyzes the reversible formation of acyl-phosphate (acyl-PO(4)) from acyl-[acyl-carrier-protein] (acyl-ACP). This enzyme utilizes acyl-ACP as fatty acyl donor, but not acyl-CoA. In Bacillus cytotoxicus (strain DSM 22905 / CIP 110041 / 391-98 / NVH 391-98), this protein is Phosphate acyltransferase.